Here is a 428-residue protein sequence, read N- to C-terminus: UPF0229 protein YeaH (428 aa).

Basic and acidic residues predominate over residues glycine 78 to arginine 90. The disordered stretch occupies residues glycine 78–glutamate 111. Gly residues predominate over residues glutamine 92 to glutamine 103.

It belongs to the UPF0229 family.

This chain is UPF0229 protein YeaH, found in Salmonella heidelberg (strain SL476).